Consider the following 412-residue polypeptide: Aspartate aminotransferase, cytoplasmic (412 aa).

A2 carries the N-acetylalanine modification. L-aspartate contacts are provided by G38, W140, and N194. K258 is subject to N6-(pyridoxal phosphate)lysine. R386 contacts L-aspartate.

The protein belongs to the class-I pyridoxal-phosphate-dependent aminotransferase family. As to quaternary structure, homodimer. Pyridoxal 5'-phosphate serves as cofactor.

It localises to the cytoplasm. It catalyses the reaction L-aspartate + 2-oxoglutarate = oxaloacetate + L-glutamate. It carries out the reaction L-cysteine + 2-oxoglutarate = 2-oxo-3-sulfanylpropanoate + L-glutamate. The catalysed reaction is (2S)-2-aminobutanoate + 2-oxoglutarate = 2-oxobutanoate + L-glutamate. The enzyme catalyses 3-sulfino-L-alanine + 2-oxoglutarate = 3-sulfinopyruvate + L-glutamate. Biosynthesis of L-glutamate from L-aspartate or L-cysteine. Important regulator of levels of glutamate, the major excitatory neurotransmitter of the vertebrate central nervous system. Acts as a scavenger of glutamate in brain neuroprotection. The aspartate aminotransferase activity is involved in hepatic glucose synthesis during development and in adipocyte glyceroneogenesis. Using L-cysteine as substrate, regulates levels of mercaptopyruvate, an important source of hydrogen sulfide. Mercaptopyruvate is converted into H(2)S via the action of 3-mercaptopyruvate sulfurtransferase (3MST). Hydrogen sulfide is an important synaptic modulator and neuroprotectant in the brain. In Gallus gallus (Chicken), this protein is Aspartate aminotransferase, cytoplasmic.